Here is a 396-residue protein sequence, read N- to C-terminus: MMMMSGRPSGGAGGGRYPFTASQWQELEHQALIYKYMASGTPIPSDLILPLRRSFLLDSALATSPSLAFPPQPSLGWGCFGMGFGRKAEDPEPGRCRRTDGKKWRCSKEAYPDSKYCEKHMHRGKNRSRKPVEMSLATPPPPSSSATSAASNSSAGVAPTTTTTSSPAPSYSRPAPHDAAPYQALYGGPYAAATARTPAAAAYHAQVSPFHLHIDTTHPHPPPSYYSMDHKEYAYGHATKEVHGEHAFFSDGTEREHHHAAAGHGQWQFKQLGMEPKQSTTPLFPGAGYGHTAASPYAIDLSKEDDDEKERRQQQQQQQQHCFLLGADLRLEKPAGHDHAAAAQKPLRHFFDEWPHEKNSKGSWMGLEGETQLSMSIPMAANDLPITTTSRYHNDE.

Residues 18–53 form the QLQ domain; it reads PFTASQWQELEHQALIYKYMASGTPIPSDLILPLRR. 2 consecutive short sequence motifs (bipartite nuclear localization signal) follow at residues 86-105 and 123-130; these read RKAEDPEPGRCRRTDGKKWR and RGKNRSRK. A WRC domain is found at 90–134; that stretch reads DPEPGRCRRTDGKKWRCSKEAYPDSKYCEKHMHRGKNRSRKPVEM. Residues 117–176 are disordered; sequence CEKHMHRGKNRSRKPVEMSLATPPPPSSSATSAASNSSAGVAPTTTTTSSPAPSYSRPAP. Residues 120–129 are compositionally biased toward basic residues; that stretch reads HMHRGKNRSR. The span at 144 to 174 shows a compositional bias: low complexity; that stretch reads SSATSAASNSSAGVAPTTTTTSSPAPSYSRP.

Belongs to the GRF family. As to expression, highly expressed in the intercalary meristem of the internode and in the shoot apex. Detected in the leaf primordia and emerging leaves in the uppermost node. Preferentially localized in the epidermis and in the tissues surrounding vascular bundles of the intercalary meristem of the internode and in adventitious roots of the second highest node. Low expression in the coleoptile and in the youngest leaf.

It is found in the nucleus. Functionally, transcription activator that plays a regulatory role in gibberellin-induced stem elongation. The polypeptide is Growth-regulating factor 1 (GRF1) (Oryza sativa subsp. indica (Rice)).